The chain runs to 594 residues: Developmental and secondary metabolism regulator veA (594 aa).

One can recognise a Velvet domain in the interval 24–220 (GRRLFYRIDV…AEQGTRVRIR (197 aa)). The short motif at 38-43 (EKCRAC) is the Nuclear localization signal element. Disordered stretches follow at residues 40–59 (CRAC…VDPP) and 210–558 (MAEQ…DVEE). Over residues 217–229 (VRIRRDVRMRRRD) the composition is skewed to basic residues. Pro residues predominate over residues 296–307 (APPPPNPPPPGF). Residues 327–351 (SHSQYQQPTSSSSSSEQVSSVPQSP) show a composition bias toward low complexity. A compositionally biased stretch (polar residues) spans 352-362 (AYSSHAAQQHY). Positions 374-383 (PERRLSDHRS) are enriched in basic and acidic residues. Over residues 384-403 (SQPNNHPQQSPHQHSYSHRS) the composition is skewed to low complexity. A compositionally biased stretch (basic and acidic residues) spans 405 to 416 (PQRERFMPDSRR). The PEST stretch occupies residues 457-506 (VADTQATPHLPPIRWPRPNMNLPSPPSEHQEALQPLQPAPLHYESQTHQQ). Residues 523–538 (YSYGYSYSHNHSHGYG) are compositionally biased toward low complexity.

Belongs to the velvet family. VeA subfamily. As to quaternary structure, component of the heterotrimeric velvet complex composed of LAEA, VEA and VELB; VEA acting as a bridging protein between LAEA and VELB.

Its subcellular location is the nucleus. It localises to the cytoplasm. In terms of biological role, component of the velvet transcription factor complex that controls sexual/asexual developmental ratio in response to light, promoting sexual development in the darkness while stimulating asexual sporulation under illumination. The velvet complex acts as a global regulator for secondary metabolite gene expression. Regulates of the response to reactive oxygen species (ROS) stress. The chain is Developmental and secondary metabolism regulator veA from Pyricularia oryzae (strain 70-15 / ATCC MYA-4617 / FGSC 8958) (Rice blast fungus).